We begin with the raw amino-acid sequence, 168 residues long: HTH-type transcriptional regulator IscR (168 aa).

One can recognise an HTH rrf2-type domain in the interval 2–131 (KLTSKGRYAV…DGISLGELMV (130 aa)). The segment at residues 28 to 51 (LADISERQGISLSYLEQLFSKLRK) is a DNA-binding region (H-T-H motif). [2Fe-2S] cluster is bound by residues C92, C98, and C104.

[2Fe-2S] cluster serves as cofactor.

Regulates the transcription of several operons and genes involved in the biogenesis of Fe-S clusters and Fe-S-containing proteins. The sequence is that of HTH-type transcriptional regulator IscR from Aliivibrio salmonicida (strain LFI1238) (Vibrio salmonicida (strain LFI1238)).